The chain runs to 144 residues: Transcription antitermination protein NusB (144 aa).

Belongs to the NusB family.

In terms of biological role, involved in transcription antitermination. Required for transcription of ribosomal RNA (rRNA) genes. Binds specifically to the boxA antiterminator sequence of the ribosomal RNA (rrn) operons. This Pasteurella multocida (strain Pm70) protein is Transcription antitermination protein NusB.